Consider the following 184-residue polypeptide: UPF0149 protein PputGB1_5261 (184 aa).

The protein belongs to the UPF0149 family.

This chain is UPF0149 protein PputGB1_5261, found in Pseudomonas putida (strain GB-1).